Consider the following 406-residue polypeptide: Tryptophan synthase beta chain (406 aa).

N6-(pyridoxal phosphate)lysine is present on Lys-99.

This sequence belongs to the TrpB family. Tetramer of two alpha and two beta chains. The cofactor is pyridoxal 5'-phosphate.

It carries out the reaction (1S,2R)-1-C-(indol-3-yl)glycerol 3-phosphate + L-serine = D-glyceraldehyde 3-phosphate + L-tryptophan + H2O. It functions in the pathway amino-acid biosynthesis; L-tryptophan biosynthesis; L-tryptophan from chorismate: step 5/5. In terms of biological role, the beta subunit is responsible for the synthesis of L-tryptophan from indole and L-serine. The chain is Tryptophan synthase beta chain from Rhizobium johnstonii (strain DSM 114642 / LMG 32736 / 3841) (Rhizobium leguminosarum bv. viciae).